We begin with the raw amino-acid sequence, 239 residues long: Tetraspanin-9 (239 aa).

Over 1 to 13 (MARGCLCCLKYMM) the chain is Cytoplasmic. Residues 14-34 (FLFNLIFWLCGCGLLGVGIWL) traverse the membrane as a helical segment. Topologically, residues 35–55 (SVSQGNFATFSPSFPSLSAAN) are extracellular. A helical membrane pass occupies residues 56-76 (LVIAIGTIVMVTGFLGCLGAI). Over 77–85 (KENKCLLLS) the chain is Cytoplasmic. The chain crosses the membrane as a helical span at residues 86–106 (FFIVLLVILLAELILLILFFV). Residues 107–203 (YMDKVNENAK…VKMWFDDNKH (97 aa)) lie on the Extracellular side of the membrane. Residue N180 is glycosylated (N-linked (GlcNAc...) asparagine). The helical transmembrane segment at 204–224 (VLGTVGMCILIMQILGMAFSM) threads the bilayer. At 225 to 239 (TLFQHIHRTGKKYDA) the chain is on the cytoplasmic side.

It belongs to the tetraspanin (TM4SF) family. As to quaternary structure, found in a complex with GP6. In terms of processing, glycosylated. Expressed in megakaryocytes and platelets (at protein level).

The protein resides in the membrane. This is Tetraspanin-9 (TSPAN9) from Homo sapiens (Human).